We begin with the raw amino-acid sequence, 116 residues long: Nucleoid-associated protein PMT9312_0020 (116 aa).

The protein belongs to the YbaB/EbfC family. As to quaternary structure, homodimer.

It localises to the cytoplasm. It is found in the nucleoid. Binds to DNA and alters its conformation. May be involved in regulation of gene expression, nucleoid organization and DNA protection. This Prochlorococcus marinus (strain MIT 9312) protein is Nucleoid-associated protein PMT9312_0020.